The chain runs to 140 residues: Neuropeptide CCHamide-2 (140 aa).

The first 22 residues, 1 to 22, serve as a signal peptide directing secretion; it reads MAQMYLAVTIIALLAISHGVSA. Cys26 and Cys33 are disulfide-bonded. Position 37 is a histidine amide (His37). The propeptide occupies 41 to 140; that stretch reads SGDTSAMDQL…PDDGYYIESL (100 aa).

In terms of tissue distribution, expressed in corpora cardiaca (CC), corpora allata (CA), antennal lobe (AL) and gnathal ganglion (GNG) (at protein level). Expression detected in few animals (at protein level).

The protein resides in the secreted. Its function is as follows. Ligand for the CCHamide-2 receptor CCHa2-R. This Agrotis ipsilon (Black cutworm moth) protein is Neuropeptide CCHamide-2.